Consider the following 300-residue polypeptide: Free fatty acid receptor 1 (300 aa).

Over 1-8 (MDLPPQLS) the chain is Extracellular. The chain crosses the membrane as a helical span at residues 9–31 (FALYVAAFALGFPLNVLAIRGAR). Residues 32–41 (AHARRRLTPS) are Cytoplasmic-facing. Residues 42–64 (LVYALNLGCSDLLLTVSLPLKAV) form a helical membrane-spanning segment. Residues 65-79 (EALASGAWPLPASLC) lie on the Extracellular side of the membrane. Cysteine 79 and cysteine 170 are oxidised to a cystine. A helical transmembrane segment spans residues 80–101 (PVFGVAHFAPLYAGGGFLAALS). The Cytoplasmic segment spans residues 102 to 121 (AGRYLGAAFPLGYQAFRRPC). Residues 122-142 (YSWGVCAAIWALVLCHLGLVF) traverse the membrane as a helical segment. The Extracellular segment spans residues 143–178 (VLEAPGGWLDHSNTSLGINTPVNGSPVCLEAWDPAS). Asparagine 155 is a glycosylation site (N-linked (GlcNAc...) asparagine). A helical transmembrane segment spans residues 179 to 200 (AGPARFSLSLLLFFLPLAITAF). The Cytoplasmic segment spans residues 201 to 223 (CYVGCLRALAHSGLTHRRKLRAA). A helical transmembrane segment spans residues 224–248 (WVAGGALLTLLLCVGPYNASNVASF). Residues 249 to 256 (LNPNLGGS) are Extracellular-facing. A helical membrane pass occupies residues 257–279 (WRKLGLITGAWSVVLNPLVTGYL). Topologically, residues 280–300 (GRGPGLKTVCAARTQGSTSQK) are cytoplasmic.

This sequence belongs to the G-protein coupled receptor 1 family.

Its subcellular location is the cell membrane. In terms of biological role, G-protein coupled receptor for medium and long chain saturated and unsaturated fatty acids that plays an important role in glucose homeostasis. Fatty acid binding increases glucose-stimulated insulin secretion, and may also enhance the secretion of glucagon-like peptide 1 (GLP-1). May also play a role in bone homeostasis; receptor signaling activates pathways that inhibit osteoclast differentiation. Ligand binding leads to a conformation change that triggers signaling via G-proteins that activate phospholipase C, leading to an increase of the intracellular calcium concentration. Seems to act through a G(q) and G(i)-mediated pathway. Mediates the anti-inflammatory effects of omega-3 polyunsaturated fatty acids (PUFAs) via inhibition of NLRP3 inflammasome activation. This Macaca fascicularis (Crab-eating macaque) protein is Free fatty acid receptor 1 (FFAR1).